We begin with the raw amino-acid sequence, 120 residues long: Xibalbin-1 (120 aa).

Residues 1–21 (MISKILIAACALLLISHLVLA) form the signal peptide. Residues 22 to 63 (VPYLEDGLNSLHNRTGESDETRGYTIQLLKEMPEDDAVEDYS) constitute a propeptide that is removed on maturation. Cystine bridges form between cysteine 79–cysteine 94, cysteine 86–cysteine 99, cysteine 93–cysteine 110, and cysteine 101–cysteine 108.

This sequence belongs to the xibalbin-1 family. As to expression, expressed by the venom gland. Not found in the whole body.

It localises to the secreted. Functionally, probable neurotoxin. Strongly inhibits voltage-gated potassium channels (Kv1.1/KCNA1, Kv1.2/KCNA2, Kv1.3/KCNA3, and Kv1.6/KCNA6, with the highest toxicity against Kv1.6 (74% inhibition at 1 uM)) and mildly inhibits sodium channels (Nav1.2/SCN2A, Nav1.4/SCN4A, Nav1.5/SCN5A, Nav1.6/SCN8A, and BgNav). Induces activation of protein kinase A type II (PKA-II) and MAP kinase Erk1/2 in primary nociceptive and non-nociceptive sensory neurons. Does not show cytotoxic activity. Does not have an impact on Ca2+, cAMP, and NO signaling in the cell types analyzed. Does not interfere with the adhesion of leukocytes to endothelial cells. This is Xibalbin-1 from Xibalbanus tulumensis (Blind cave remipede).